A 343-amino-acid polypeptide reads, in one-letter code: L-lysine cyclodeaminase (343 aa).

Belongs to the ornithine cyclodeaminase/mu-crystallin family. Requires NAD(+) as cofactor.

The catalysed reaction is L-lysine = L-pipecolate + NH4(+). The protein operates within antibiotic biosynthesis. With respect to regulation, inhibited by nipecotic acid and thiazolidine-2-carboxylic acid. Converts L-lysine to L-pipecolate, which is incorporated into multiple secondary metabolite products, including rapamycin, tobulysin, virginiamycin and pristinamycin. This Streptomyces rapamycinicus (strain ATCC 29253 / DSM 41530 / NRRL 5491 / AYB-994) (Streptomyces hygroscopicus (strain ATCC 29253)) protein is L-lysine cyclodeaminase (rapL).